The primary structure comprises 298 residues: Protease HtpX (298 aa).

Helical transmembrane passes span 4–24 (IGLFLLTNIAVLAVAMITMNL) and 38–58 (LGNLFAFAAIIGFAGSFVSLA). Histidine 145 provides a ligand contact to Zn(2+). Glutamate 146 is a catalytic residue. Histidine 149 lines the Zn(2+) pocket. 2 consecutive transmembrane segments (helical) span residues 160–180 (LLQGVVNTFVIFFAKIVAYVV) and 194–214 (ITFIVVDIVAQILFGILASMI). A Zn(2+)-binding site is contributed by glutamate 223.

The protein belongs to the peptidase M48B family. Requires Zn(2+) as cofactor.

It localises to the cell inner membrane. In Hydrogenovibrio crunogenus (strain DSM 25203 / XCL-2) (Thiomicrospira crunogena), this protein is Protease HtpX.